The chain runs to 469 residues: Neuraminidase (469 aa).

Residues 1-9 (MNPNQKIIT) lie on the Intravirion side of the membrane. The chain crosses the membrane as a helical span at residues 10–30 (IGSVSLTIATICFLMQIAILV). Positions 11-33 (GSVSLTIATICFLMQIAILVTTV) are involved in apical transport and lipid raft association. Residues 31 to 469 (TTVTLHFKQY…DGADINLMPI (439 aa)) lie on the Virion surface side of the membrane. A hypervariable stalk region region spans residues 36-88 (HFKQYECDSPANNQVMPCEPISIERNITEIVYLTNTTIEKEICPKLVEYRNWS). N-linked (GlcNAc...) asparagine; by host glycosylation is found at asparagine 61, asparagine 70, and asparagine 86. Residues 91–469 (QCKITGFAPF…DGADINLMPI (379 aa)) are head of neuraminidase. Intrachain disulfides connect cysteine 92-cysteine 417, cysteine 124-cysteine 129, cysteine 183-cysteine 230, cysteine 232-cysteine 237, cysteine 278-cysteine 291, cysteine 280-cysteine 289, cysteine 318-cysteine 337, and cysteine 421-cysteine 447. Arginine 118 contributes to the substrate binding site. N-linked (GlcNAc...) asparagine; by host glycosylation occurs at asparagine 146. The active-site Proton donor/acceptor is aspartate 151. Substrate is bound at residue arginine 152. Residues asparagine 200 and asparagine 234 are each glycosylated (N-linked (GlcNAc...) asparagine; by host). 276-277 (EE) lines the substrate pocket. A substrate-binding site is contributed by arginine 292. Ca(2+) is bound by residues aspartate 293, glycine 297, and aspartate 324. Arginine 371 is a binding site for substrate. A glycan (N-linked (GlcNAc...) asparagine; by host) is linked at asparagine 402. Catalysis depends on tyrosine 406, which acts as the Nucleophile.

It belongs to the glycosyl hydrolase 34 family. Homotetramer. The cofactor is Ca(2+). In terms of processing, N-glycosylated.

It is found in the virion membrane. The protein localises to the host apical cell membrane. The catalysed reaction is Hydrolysis of alpha-(2-&gt;3)-, alpha-(2-&gt;6)-, alpha-(2-&gt;8)- glycosidic linkages of terminal sialic acid residues in oligosaccharides, glycoproteins, glycolipids, colominic acid and synthetic substrates.. Its activity is regulated as follows. Inhibited by the neuraminidase inhibitors zanamivir (Relenza) and oseltamivir (Tamiflu). These drugs interfere with the release of progeny virus from infected cells and are effective against all influenza strains. Resistance to neuraminidase inhibitors is quite rare. In terms of biological role, catalyzes the removal of terminal sialic acid residues from viral and cellular glycoconjugates. Cleaves off the terminal sialic acids on the glycosylated HA during virus budding to facilitate virus release. Additionally helps virus spread through the circulation by further removing sialic acids from the cell surface. These cleavages prevent self-aggregation and ensure the efficient spread of the progeny virus from cell to cell. Otherwise, infection would be limited to one round of replication. Described as a receptor-destroying enzyme because it cleaves a terminal sialic acid from the cellular receptors. May facilitate viral invasion of the upper airways by cleaving the sialic acid moieties on the mucin of the airway epithelial cells. Likely to plays a role in the budding process through its association with lipid rafts during intracellular transport. May additionally display a raft-association independent effect on budding. Plays a role in the determination of host range restriction on replication and virulence. Sialidase activity in late endosome/lysosome traffic seems to enhance virus replication. The chain is Neuraminidase from Aves (whales).